The sequence spans 194 residues: MGVIATPPPSVQGPSSQVPSSAPIPPGPVQDAYLQAVQQEMQDKGYLVARFDALMDWARTGSLWPMTFGLACCAVEMIHAYMARYDLDRFGVIPRPSPRQSDVMIVAGTVCNKMAPALRKVYDQMAEPRWVISMGSCANGGGYYHYSYSVVRGVDRIVPVDIYVPGCPPTAEALVYGVLQLQKKIKNGNRLIRT.

Over residues 1–11 (MGVIATPPPSV) the composition is skewed to pro residues. A disordered region spans residues 1 to 24 (MGVIATPPPSVQGPSSQVPSSAPI). Residues 12-21 (QGPSSQVPSS) show a composition bias toward low complexity. [4Fe-4S] cluster-binding residues include Cys-72, Cys-73, Cys-137, and Cys-167.

The protein belongs to the complex I 20 kDa subunit family. NDH-1 is composed of 14 different subunits. Subunits NuoB, C, D, E, F, and G constitute the peripheral sector of the complex. [4Fe-4S] cluster serves as cofactor.

The protein resides in the cell inner membrane. It catalyses the reaction a quinone + NADH + 5 H(+)(in) = a quinol + NAD(+) + 4 H(+)(out). In terms of biological role, NDH-1 shuttles electrons from NADH, via FMN and iron-sulfur (Fe-S) centers, to quinones in the respiratory chain. The immediate electron acceptor for the enzyme in this species is believed to be ubiquinone. Couples the redox reaction to proton translocation (for every two electrons transferred, four hydrogen ions are translocated across the cytoplasmic membrane), and thus conserves the redox energy in a proton gradient. This Rhodospirillum centenum (strain ATCC 51521 / SW) protein is NADH-quinone oxidoreductase subunit B.